A 210-amino-acid chain; its full sequence is ATP-dependent Clp protease proteolytic subunit (210 aa).

The Nucleophile role is filled by S106. H131 is an active-site residue.

It belongs to the peptidase S14 family. Fourteen ClpP subunits assemble into 2 heptameric rings which stack back to back to give a disk-like structure with a central cavity, resembling the structure of eukaryotic proteasomes.

It localises to the cytoplasm. The enzyme catalyses Hydrolysis of proteins to small peptides in the presence of ATP and magnesium. alpha-casein is the usual test substrate. In the absence of ATP, only oligopeptides shorter than five residues are hydrolyzed (such as succinyl-Leu-Tyr-|-NHMec, and Leu-Tyr-Leu-|-Tyr-Trp, in which cleavage of the -Tyr-|-Leu- and -Tyr-|-Trp bonds also occurs).. In terms of biological role, cleaves peptides in various proteins in a process that requires ATP hydrolysis. Has a chymotrypsin-like activity. Plays a major role in the degradation of misfolded proteins. This is ATP-dependent Clp protease proteolytic subunit from Azospirillum brasilense.